Here is a 180-residue protein sequence, read N- to C-terminus: Interleukin-17B (180 aa).

Positions 1–22 are cleaved as a signal peptide; sequence MDWPHSLLFLLAISIFLAPSHP. Positions 22-44 are disordered; it reads PRNTKGKRKGQGRPSPLAPGPHQ. Positions 23–32 are enriched in basic residues; it reads RNTKGKRKGQ. Asparagine 75 carries an N-linked (GlcNAc...) asparagine glycan. 2 cysteine pairs are disulfide-bonded: cysteine 121–cysteine 176 and cysteine 126–cysteine 178.

Belongs to the IL-17 family.

The protein localises to the secreted. Stimulates the release of tumor necrosis factor alpha and IL-1-beta from the monocytic cell line THP-1. This chain is Interleukin-17B (Il17b), found in Mus musculus (Mouse).